The following is a 238-amino-acid chain: Probable septum site-determining protein MinC (238 aa).

This sequence belongs to the MinC family. As to quaternary structure, interacts with MinD and FtsZ.

Cell division inhibitor that blocks the formation of polar Z ring septums. Rapidly oscillates between the poles of the cell to destabilize FtsZ filaments that have formed before they mature into polar Z rings. Prevents FtsZ polymerization. The polypeptide is Probable septum site-determining protein MinC (Xylella fastidiosa (strain M12)).